Consider the following 80-residue polypeptide: MSNKGQLLQDPFLNALRKEHVPVSIYLVNGIKLQGNIESFDQYVVLLRNTVTQMVYKHAISTVVPARPVNFHPDAEATTS.

In terms of domain architecture, Sm spans 10-69; sequence DPFLNALRKEHVPVSIYLVNGIKLQGNIESFDQYVVLLRNTVTQMVYKHAISTVVPARPV.

Belongs to the Hfq family. Homohexamer.

RNA chaperone that binds small regulatory RNA (sRNAs) and mRNAs to facilitate mRNA translational regulation in response to envelope stress, environmental stress and changes in metabolite concentrations. Also binds with high specificity to tRNAs. The polypeptide is RNA-binding protein Hfq (Burkholderia ambifaria (strain ATCC BAA-244 / DSM 16087 / CCUG 44356 / LMG 19182 / AMMD) (Burkholderia cepacia (strain AMMD))).